A 394-amino-acid polypeptide reads, in one-letter code: Dual-specificity RNA methyltransferase RlmN (394 aa).

The active-site Proton acceptor is Glu-116. A Radical SAM core domain is found at 122–365 (EEDRGTLCVS…SPIRTPRGED (244 aa)). A disulfide bridge connects residues Cys-129 and Cys-370. Cys-136, Cys-140, and Cys-143 together coordinate [4Fe-4S] cluster. S-adenosyl-L-methionine is bound by residues 196-197 (GE), Ser-228, 250-252 (SFH), and Asn-327. Cys-370 serves as the catalytic S-methylcysteine intermediate.

Belongs to the radical SAM superfamily. RlmN family. The cofactor is [4Fe-4S] cluster.

It is found in the cytoplasm. The enzyme catalyses adenosine(2503) in 23S rRNA + 2 reduced [2Fe-2S]-[ferredoxin] + 2 S-adenosyl-L-methionine = 2-methyladenosine(2503) in 23S rRNA + 5'-deoxyadenosine + L-methionine + 2 oxidized [2Fe-2S]-[ferredoxin] + S-adenosyl-L-homocysteine. It catalyses the reaction adenosine(37) in tRNA + 2 reduced [2Fe-2S]-[ferredoxin] + 2 S-adenosyl-L-methionine = 2-methyladenosine(37) in tRNA + 5'-deoxyadenosine + L-methionine + 2 oxidized [2Fe-2S]-[ferredoxin] + S-adenosyl-L-homocysteine. Its function is as follows. Specifically methylates position 2 of adenine 2503 in 23S rRNA and position 2 of adenine 37 in tRNAs. m2A2503 modification seems to play a crucial role in the proofreading step occurring at the peptidyl transferase center and thus would serve to optimize ribosomal fidelity. In Dinoroseobacter shibae (strain DSM 16493 / NCIMB 14021 / DFL 12), this protein is Dual-specificity RNA methyltransferase RlmN.